The following is an 876-amino-acid chain: E3 ubiquitin-protein ligase TRIM71 (876 aa).

The RING-type zinc-finger motif lies at 12-90 (CPLCKEMCGS…ALKLRCPICD (79 aa)). A compositionally biased stretch (low complexity) spans 26–40 (SSNSSTSSSSSQTSG). 2 disordered regions span residues 26-46 (SSNS…GGGG) and 128-192 (KNGR…AALL). Residues 137-148 (PAAGSGAGGGGA) show a composition bias toward gly residues. The segment covering 160-182 (RAAAAASSPAAGSAAPSASSSSS) has biased composition (low complexity). Residues 200–247 (QGEPRCSSCDEGNAASSRCLDCQEHLCDNCVRAHQRVRLTKDHFIERF) form a B box-type 1; atypical zinc finger. 8 residues coordinate Zn(2+): cysteine 205, cysteine 208, cysteine 229, histidine 233, cysteine 286, histidine 289, cysteine 309, and histidine 314. The B box-type 2 zinc-finger motif lies at 281–322 (ERASYCQHHDDEVLHFYCDTCSVPICRECTMGRHVGHSFIYL). Coiled-coil stretches lie at residues 344-373 (RQAI…SEVK) and 399-434 (QVKA…EEGR). One copy of the Filamin repeat lies at 487-588 (SSGAFAPLTK…IENSPFKVVV (102 aa)). 6 NHL repeats span residues 601 to 644 (GLSF…FKPC), 648 to 691 (HHKF…FTFE), 695 to 738 (ILKF…FGPD), 742 to 785 (LNKY…IHAD), 789 to 832 (ARFL…FESN), and 836 to 876 (LCKF…ILVF).

Belongs to the TRIM/RBCC family.

The protein localises to the cytoplasm. It is found in the P-body. It catalyses the reaction S-ubiquitinyl-[E2 ubiquitin-conjugating enzyme]-L-cysteine + [acceptor protein]-L-lysine = [E2 ubiquitin-conjugating enzyme]-L-cysteine + N(6)-ubiquitinyl-[acceptor protein]-L-lysine.. Its pathway is protein modification; protein ubiquitination. E3 ubiquitin-protein ligase that cooperates with the microRNAs (miRNAs) machinery and promotes embryonic stem cells proliferation and maintenance. Binds to miRNAs and participates in post-transcriptional repression of transcripts. Required to maintain proliferation and prevent premature differentiation of neural progenitor cells during early neural development. The chain is E3 ubiquitin-protein ligase TRIM71 (TRIM71) from Gallus gallus (Chicken).